The chain runs to 511 residues: GMP synthase [glutamine-hydrolyzing] (511 aa).

In terms of domain architecture, Glutamine amidotransferase type-1 spans alanine 5–asparagine 195. Cysteine 82 serves as the catalytic Nucleophile. Catalysis depends on residues histidine 169 and glutamate 171. Residues tryptophan 196 to arginine 386 form the GMPS ATP-PPase domain. ATP is bound at residue serine 223–leucine 229.

As to quaternary structure, homodimer.

It carries out the reaction XMP + L-glutamine + ATP + H2O = GMP + L-glutamate + AMP + diphosphate + 2 H(+). The protein operates within purine metabolism; GMP biosynthesis; GMP from XMP (L-Gln route): step 1/1. Its function is as follows. Catalyzes the synthesis of GMP from XMP. This Borreliella burgdorferi (strain ATCC 35210 / DSM 4680 / CIP 102532 / B31) (Borrelia burgdorferi) protein is GMP synthase [glutamine-hydrolyzing] (guaA).